We begin with the raw amino-acid sequence, 321 residues long: 37 kDa cell surface protein (321 aa).

The protein resides in the secreted. It is found in the cell wall. The chain is 37 kDa cell surface protein (CSP37) from Candida albicans (Yeast).